We begin with the raw amino-acid sequence, 486 residues long: Membrane-bound lytic murein transglycosylase F (486 aa).

A signal peptide spans 1 to 21; the sequence is MTRIKLSYFTIGLVALLLALA. The tract at residues 22 to 268 is non-LT domain; sequence LWPNIPWRNG…RLEEKYLGHV (247 aa). The segment at 269–486 is LT domain; it reads GSFDYVDTKT…VVGPGWSIGD (218 aa). Glutamate 313 is an active-site residue.

It in the N-terminal section; belongs to the bacterial solute-binding protein 3 family. The protein in the C-terminal section; belongs to the transglycosylase Slt family.

It is found in the cell outer membrane. The catalysed reaction is Exolytic cleavage of the (1-&gt;4)-beta-glycosidic linkage between N-acetylmuramic acid (MurNAc) and N-acetylglucosamine (GlcNAc) residues in peptidoglycan, from either the reducing or the non-reducing ends of the peptidoglycan chains, with concomitant formation of a 1,6-anhydrobond in the MurNAc residue.. Its function is as follows. Murein-degrading enzyme that degrades murein glycan strands and insoluble, high-molecular weight murein sacculi, with the concomitant formation of a 1,6-anhydromuramoyl product. Lytic transglycosylases (LTs) play an integral role in the metabolism of the peptidoglycan (PG) sacculus. Their lytic action creates space within the PG sacculus to allow for its expansion as well as for the insertion of various structures such as secretion systems and flagella. The polypeptide is Membrane-bound lytic murein transglycosylase F (Yersinia pestis bv. Antiqua (strain Antiqua)).